Reading from the N-terminus, the 935-residue chain is Ribonuclease E (935 aa).

In terms of domain architecture, S1 motif spans 39 to 119 (ANIYKGKITR…GNKGAALTTF (81 aa)). 2 residues coordinate Mg(2+): aspartate 302 and aspartate 345. 2 residues coordinate Zn(2+): cysteine 403 and cysteine 406. The interval 403 to 406 (CPRC) is required for zinc-mediated homotetramerization and catalytic activity. 2 disordered regions span residues 571 to 669 (TKSE…DLRK) and 698 to 743 (VQNN…KSPM). 2 stretches are compositionally biased toward basic and acidic residues: residues 593–625 (RSQDRRSSRRPRSENNETERTEEQVRNVRERNQ) and 701–719 (NDEKPVHQNQRSERQERQR). Residues 720–734 (RTPRHLRAANNQRRR) show a composition bias toward basic residues.

Belongs to the RNase E/G family. RNase E subfamily. Component of the RNA degradosome, which is a multiprotein complex involved in RNA processing and mRNA degradation. Within the RNA degradosome, RNase E assembles into a homotetramer formed by a dimer of dimers. It depends on Zn(2+) as a cofactor. Mg(2+) is required as a cofactor.

Its subcellular location is the cytoplasm. It localises to the cell inner membrane. The catalysed reaction is Endonucleolytic cleavage of single-stranded RNA in A- and U-rich regions.. Functionally, endoribonuclease that plays a central role in RNA processing and decay. Required for the maturation of 5S and 16S rRNAs and the majority of tRNAs. Also involved in the degradation of most mRNAs. This Haemophilus influenzae (strain ATCC 51907 / DSM 11121 / KW20 / Rd) protein is Ribonuclease E.